Reading from the N-terminus, the 335-residue chain is Putative hydrogenase expression/formation protein MJ0676 (335 aa).

This sequence belongs to the HypE family.

In Methanocaldococcus jannaschii (strain ATCC 43067 / DSM 2661 / JAL-1 / JCM 10045 / NBRC 100440) (Methanococcus jannaschii), this protein is Putative hydrogenase expression/formation protein MJ0676.